A 77-amino-acid chain; its full sequence is Defensin-like protein 161 (77 aa).

A signal peptide spans 1–27 (MAKLSCSYLLVFMLVFSAILMVEKVEG). Disulfide bonds link cysteine 30/cysteine 77, cysteine 40/cysteine 59, cysteine 45/cysteine 71, and cysteine 49/cysteine 73.

Belongs to the DEFL family.

It localises to the secreted. The polypeptide is Defensin-like protein 161 (LCR27) (Arabidopsis thaliana (Mouse-ear cress)).